A 74-amino-acid polypeptide reads, in one-letter code: UPF0291 protein EF_0064 (74 aa).

The segment at 53-74 (YDPTGEDVTPEKLKEEQQKYFD) is disordered. Residues 61–74 (TPEKLKEEQQKYFD) are compositionally biased toward basic and acidic residues.

The protein belongs to the UPF0291 family.

Its subcellular location is the cytoplasm. In Enterococcus faecalis (strain ATCC 700802 / V583), this protein is UPF0291 protein EF_0064.